Consider the following 412-residue polypeptide: Argininosuccinate synthase (412 aa).

ATP contacts are provided by residues 15-23 and A42; that span reads AYSGGLDTS. L-citrulline-binding residues include Y93 and S98. Residue G123 participates in ATP binding. L-aspartate-binding residues include T125, N129, and D130. N129 is a binding site for L-citrulline. L-citrulline contacts are provided by R133, S185, S194, E270, and Y282.

It belongs to the argininosuccinate synthase family. Type 1 subfamily. In terms of assembly, homotetramer.

The protein localises to the cytoplasm. It carries out the reaction L-citrulline + L-aspartate + ATP = 2-(N(omega)-L-arginino)succinate + AMP + diphosphate + H(+). It participates in amino-acid biosynthesis; L-arginine biosynthesis; L-arginine from L-ornithine and carbamoyl phosphate: step 2/3. The chain is Argininosuccinate synthase from Psychrobacter arcticus (strain DSM 17307 / VKM B-2377 / 273-4).